A 238-amino-acid chain; its full sequence is Valine-rich protein (238 aa).

Positions 1-16 (MQAVLLVVALFGAALA) are cleaved as a signal peptide.

In terms of tissue distribution, prismatic layer of shell (at protein level). Expressed primarily in the mantle with highest level in the mantle edge and lower level in the mantle pallium.

It is found in the secreted. This is Valine-rich protein from Margaritifera margaritifera (Freshwater pearl mussel).